A 250-amino-acid chain; its full sequence is Ubiquinone/menaquinone biosynthesis C-methyltransferase UbiE (250 aa).

Residues Thr-73, Asp-94, and 122–123 (DA) each bind S-adenosyl-L-methionine.

It belongs to the class I-like SAM-binding methyltransferase superfamily. MenG/UbiE family.

The catalysed reaction is a 2-demethylmenaquinol + S-adenosyl-L-methionine = a menaquinol + S-adenosyl-L-homocysteine + H(+). The enzyme catalyses a 2-methoxy-6-(all-trans-polyprenyl)benzene-1,4-diol + S-adenosyl-L-methionine = a 5-methoxy-2-methyl-3-(all-trans-polyprenyl)benzene-1,4-diol + S-adenosyl-L-homocysteine + H(+). Its pathway is quinol/quinone metabolism; menaquinone biosynthesis; menaquinol from 1,4-dihydroxy-2-naphthoate: step 2/2. The protein operates within cofactor biosynthesis; ubiquinone biosynthesis. In terms of biological role, methyltransferase required for the conversion of demethylmenaquinol (DMKH2) to menaquinol (MKH2) and the conversion of 2-polyprenyl-6-methoxy-1,4-benzoquinol (DDMQH2) to 2-polyprenyl-3-methyl-6-methoxy-1,4-benzoquinol (DMQH2). The chain is Ubiquinone/menaquinone biosynthesis C-methyltransferase UbiE from Coxiella burnetii (strain RSA 493 / Nine Mile phase I).